A 105-amino-acid polypeptide reads, in one-letter code: Large ribosomal subunit protein uL24 (105 aa).

Belongs to the universal ribosomal protein uL24 family. In terms of assembly, part of the 50S ribosomal subunit.

Its function is as follows. One of two assembly initiator proteins, it binds directly to the 5'-end of the 23S rRNA, where it nucleates assembly of the 50S subunit. Functionally, one of the proteins that surrounds the polypeptide exit tunnel on the outside of the subunit. The polypeptide is Large ribosomal subunit protein uL24 (Xanthomonas axonopodis pv. citri (strain 306)).